Consider the following 323-residue polypeptide: Sphingomyelinase D (323 aa).

The signal sequence occupies residues 1 to 20; it reads MISLLRLCSFLAAGSILVQG. The active site involves His59. Glu79, Asp81, and Asp127 together coordinate Mg(2+). The SMD-tail signature appears at 308–315; the sequence is ATNDDNPW.

This sequence belongs to the sphingomyelinase D/phospholipase D family. The cofactor is Mg(2+).

Its subcellular location is the secreted. The catalysed reaction is a sphingomyelin + H2O = an N-acylsphing-4-enine 1-phosphate + choline + H(+). In terms of biological role, catalyzes the hydrolysis of sphingomyelin. Sphingomyelinases D are produced by some spider in their venoms, but also by arthropods such as ticks, or pathogenic bacteria and fungi. They might play a role in pathogenicity through different mechanisms, such as membrane destabilization and host cell penetration, but also pulmonary inflammation and cutaneous lesions. This is Sphingomyelinase D from Trichophyton rubrum (strain ATCC MYA-4607 / CBS 118892) (Athlete's foot fungus).